We begin with the raw amino-acid sequence, 525 residues long: MTTNIHDQRILILDFGSQYTQLIARRVREIGVYCELWAWDVTEEQIREFNPNGIILSGGPESVHAKDSPRAPQYVFDAGVPVFGICYGMQTMAEQLGGAVLGSDMREFGYAQVEVVEQMALLNNIEDHVSPNGNALLDVWMSHGDKVAAVPDGFITAAKTDSCPFAAIVHPEKQFYGVQFHPEVTHTRQGQRMLSHFVLDICQCEKLWTPDAIIEDAVARMKKQIGDDEVILGLSGGVDSSVVAMLLHRAIGKNLTCVFVDNGLLRLNEGQQVMDMFGDHFGLNIIKIDAEERFLSALAGTDEPEAKRKIIGRVFVEVFDEESKKLKNAKWLAQGTIYPDVIESAGSATGKAHVIKSHHNVGGLPDDMAMGLVEPLRELFKDEVRKIGLELGLPYDMLYRHPFPGPGLGVRVLGEVKKEYCDLLRRADAIFIDELHKHDLYNKVSQAFTVFLPVKSVGVMGDARKYDWVVSLRAVETIDFMTAHWAHLPYEFLGKVSNRIINEIDGISRVVYDISGKPPATIEWE.

In terms of domain architecture, Glutamine amidotransferase type-1 spans R9–L207. C86 (nucleophile) is an active-site residue. Active-site residues include H181 and E183. Residues W208–R400 form the GMPS ATP-PPase domain. S235 to S241 lines the ATP pocket.

In terms of assembly, homodimer.

It carries out the reaction XMP + L-glutamine + ATP + H2O = GMP + L-glutamate + AMP + diphosphate + 2 H(+). It functions in the pathway purine metabolism; GMP biosynthesis; GMP from XMP (L-Gln route): step 1/1. Functionally, catalyzes the synthesis of GMP from XMP. The polypeptide is GMP synthase [glutamine-hydrolyzing] (Pseudoalteromonas atlantica (strain T6c / ATCC BAA-1087)).